Consider the following 651-residue polypeptide: Peptidoglycan D,D-transpeptidase MrdA (651 aa).

The helical transmembrane segment at 30-50 (LVAFLGILLLTGVLFTNIYQL) threads the bilayer. The active-site Acyl-ester intermediate is Ser-338.

The protein belongs to the transpeptidase family. MrdA subfamily.

Its subcellular location is the cell inner membrane. It carries out the reaction Preferential cleavage: (Ac)2-L-Lys-D-Ala-|-D-Ala. Also transpeptidation of peptidyl-alanyl moieties that are N-acyl substituents of D-alanine.. Its pathway is cell wall biogenesis; peptidoglycan biosynthesis. In terms of biological role, catalyzes cross-linking of the peptidoglycan cell wall. This Haemophilus influenzae (strain ATCC 51907 / DSM 11121 / KW20 / Rd) protein is Peptidoglycan D,D-transpeptidase MrdA.